The following is a 137-amino-acid chain: Fluoride-specific ion channel FluC 4 (137 aa).

The next 4 membrane-spanning stretches (helical) occupy residues 20 to 40 (AAIGALLRFLSGWVIVAILGA), 43 to 63 (LWGTSFVNIVGSFIIMFFATL), 83 to 103 (GLCGGLTTFSSMSLDTFLLVL), and 110 to 130 (ALAYLCGLVFLSLSAAMLGLI). 2 residues coordinate Na(+): glycine 86 and threonine 89.

It belongs to the fluoride channel Fluc/FEX (TC 1.A.43) family.

The protein localises to the cell inner membrane. It carries out the reaction fluoride(in) = fluoride(out). Its activity is regulated as follows. Na(+) is not transported, but it plays an essential structural role and its presence is essential for fluoride channel function. In terms of biological role, fluoride-specific ion channel. Important for reducing fluoride concentration in the cell, thus reducing its toxicity. The sequence is that of Fluoride-specific ion channel FluC 4 from Brucella suis biovar 1 (strain 1330).